Here is a 192-residue protein sequence, read N- to C-terminus: Xanthine phosphoribosyltransferase (192 aa).

Xanthine is bound by residues Leu-20 and Asn-27. Residue 128 to 132 (ANGQA) coordinates 5-phospho-alpha-D-ribose 1-diphosphate. Lys-156 contributes to the xanthine binding site.

It belongs to the purine/pyrimidine phosphoribosyltransferase family. Xpt subfamily. As to quaternary structure, homodimer.

The protein resides in the cytoplasm. It catalyses the reaction XMP + diphosphate = xanthine + 5-phospho-alpha-D-ribose 1-diphosphate. Its pathway is purine metabolism; XMP biosynthesis via salvage pathway; XMP from xanthine: step 1/1. Converts the preformed base xanthine, a product of nucleic acid breakdown, to xanthosine 5'-monophosphate (XMP), so it can be reused for RNA or DNA synthesis. The chain is Xanthine phosphoribosyltransferase from Lacticaseibacillus casei (strain BL23) (Lactobacillus casei).